The chain runs to 98 residues: N(2)-fixation sustaining protein CowN (98 aa).

It belongs to the CowN family.

Its function is as follows. Is required to sustain N(2)-dependent growth in the presence of low levels of carbon monoxide (CO). Probably acts by protecting the N(2) fixation ability of the nitrogenase complex, which is inactivated in the presence of CO. This chain is N(2)-fixation sustaining protein CowN, found in Paramagnetospirillum magneticum (strain ATCC 700264 / AMB-1) (Magnetospirillum magneticum).